The sequence spans 462 residues: Protein Tube (462 aa).

In terms of domain architecture, Death spans 27–152 (YSRNTELRRV…SAADFVALDF (126 aa)). Positions 218–265 (RDKSVPQPSGNTPPIAPPRRQQRSTTNSNFATLTGTGTTSTTIPNVPN) are disordered. Low complexity predominate over residues 249–259 (TLTGTGTTSTT). 2 tandem repeats follow at residues 262–269 (NVPNLTIL) and 286–293 (NIPDLSIL). A 5 X approximate repeats region spans residues 262–460 (NVPNLTILNP…ACNIPDLSEL (199 aa)). The segment covering 301–317 (RATVSDNPSNRTSSTDP) has biased composition (polar residues). Positions 301-462 (RATVSDNPSN…NIPDLSELQQ (162 aa)) are disordered. The stretch at 319–326 (NIPRITLL) is repeat 3. The segment covering 342–354 (AKASTATTSTASS) has biased composition (low complexity). Polar residues predominate over residues 355-367 (NNLPMISALNISK). Repeat unit 4 spans residues 356–363 (NLPMISAL). Positions 368–377 (GSRETLRPES) are enriched in basic and acidic residues. Positions 387–403 (DDDDDNDGEEDGEEEYP) are enriched in acidic residues. Positions 409–424 (NLSNSEQQSSNNDSSL) are enriched in low complexity. Positions 425–438 (TTVTGTSGDNSFEL) are enriched in polar residues. Positions 439–449 (TNDSSSTSNDD) are enriched in low complexity. Residues 453–460 (NIPDLSEL) form repeat 5.

Interacts (via Death domain) with pll (via Death domain). Post-translationally, phosphorylated by pll.

The protein resides in the cytoplasm. It is found in the cell membrane. In terms of biological role, plays an essential role in the Tl receptor signaling pathway that establishes embryonic dorsoventral polarity; the signal directs import of dl into ventral and ventrolateral nuclei, thereby establishing dorsoventral polarity. Tub recruits pll to the plasma membrane and protein-protein interaction activates pll. Also has a role in pupal pattern formation. The chain is Protein Tube (tub) from Drosophila melanogaster (Fruit fly).